The primary structure comprises 1014 residues: Nebulette (1014 aa).

Positions 1–24 (MRVPVFEDIKDETEEEKIGEEENE) are disordered. Acidic residues predominate over residues 9 to 24 (IKDETEEEKIGEEENE). 23 Nebulin repeats span residues 29–63 (FYKP…KSKD), 64–99 (KCTF…DLSN), 100–136 (SLYK…AKGF), 137–172 (SDYA…DTHT), 173–205 (YSAE…GIMN), 206–241 (KEPA…EMKD), 242–278 (KKHH…NMHD), 279–313 (PVSD…ENKG), 314–348 (MYHF…KNKG), 349–385 (KPML…EIKG), 386–422 (RSSL…EIKG), 423–459 (KGME…IIKG), 460–496 (KGMQ…EIKG), 497–533 (KGMQ…EIKG), 534–569 (KGMQ…KMLS), 570–599 (NYST…KKEV), 600–635 (GAGT…HATA), 636–666 (ISDP…KATP), 667–693 (VSMT…GELQ), 694–728 (RGTA…RATT), 729–759 (LSVT…QMKG), 760–794 (RPSL…KTKG), and 795–830 (RGFT…HIVE). Residue Asp96 is modified to Omega-N-methylarginine. At Arg795 the chain carries Omega-N-methylarginine. The tract at residues 836-953 (GIIVDLKVWR…VSSMRSMQHS (118 aa)) is linker. An SH3 domain is found at 954-1014 (PNLRTYRAMY…LPANYIEFVN (61 aa)).

Interacts (via nebulin repeats 1-5) with DESM (via rod region). Interacts (via SH3 domain) with XIRP2. In terms of assembly, interacts with ZYX/Zyxin. In terms of tissue distribution, abundantly expressed in cardiac muscle, but not in skeletal or smooth muscle. Localized to Z-lines in cardiac cells and to dense bodies in nonmuscle cells. Isoform 2 is expressed in non-muscle cells such as in fibroblasts.

It localises to the cytoplasm. Functionally, binds to actin and plays an important role in the assembly of the Z-disk. May functionally link sarcomeric actin to the desmin intermediate filaments in the heart muscle sarcomeres. In terms of biological role, may play a role in the assembly of focal adhesions. In Homo sapiens (Human), this protein is Nebulette.